Consider the following 502-residue polypeptide: Beta-glucosidase 7 (502 aa).

The N-terminal stretch at 1 to 22 (MKPFSQFFVFVVTVSATSYIDA) is a signal peptide. A beta-D-glucoside is bound by residues Gln-42, His-140, and 185 to 186 (NE). Glu-186 serves as the catalytic Proton donor. Residue Asn-208 is glycosylated (N-linked (GlcNAc...) asparagine). Position 325 (Tyr-325) interacts with a beta-D-glucoside. Asn-359 carries an N-linked (GlcNAc...) asparagine glycan. Residue Glu-392 participates in a beta-D-glucoside binding. Glu-392 acts as the Nucleophile in catalysis. Asn-425 carries N-linked (GlcNAc...) asparagine glycosylation. The a beta-D-glucoside site is built by Trp-435 and Tyr-451. N-linked (GlcNAc...) asparagine glycosylation is found at Asn-457 and Asn-479.

Belongs to the glycosyl hydrolase 1 family.

It carries out the reaction Hydrolysis of terminal, non-reducing beta-D-glucosyl residues with release of beta-D-glucose.. The protein is Beta-glucosidase 7 of Arabidopsis thaliana (Mouse-ear cress).